The sequence spans 414 residues: Secernin-1 (414 aa).

This sequence belongs to the peptidase C69 family. Secernin subfamily.

The protein resides in the cytoplasm. In terms of biological role, regulates exocytosis in mast cells. Increases both the extent of secretion and the sensitivity of mast cells to stimulation with calcium. The polypeptide is Secernin-1 (Scrn1) (Rattus norvegicus (Rat)).